The primary structure comprises 64 residues: Conotoxin Ts-011 (64 aa).

The signal sequence occupies residues 1-22 (MHCLPVLVILLLLIASTPSVDA). The propeptide occupies 23–51 (RPKTKDDVPLASFHGADNANRILRTLWNL). The residue at position 63 (isoleucine 63) is an Isoleucine amide.

The protein belongs to the conotoxin T superfamily. Post-translationally, contains 2 disulfide bonds that can be either 'C1-C3, C2-C4' or 'C1-C4, C2-C3', since these disulfide connectivities have been observed for conotoxins with cysteine framework V (for examples, see AC P0DQQ7 and AC P81755). In terms of tissue distribution, expressed by the venom duct.

It is found in the secreted. The polypeptide is Conotoxin Ts-011 (Conus tessulatus (Tessellate cone)).